Here is a 345-residue protein sequence, read N- to C-terminus: Probable 3'(2'),5'-bisphosphate nucleotidase 4 (345 aa).

Catalysis depends on aspartate 46, which acts as the Proton acceptor. Residues glutamate 71, aspartate 134, valine 136, and aspartate 137 each coordinate Mg(2+). Residue threonine 139 is the Proton acceptor of the active site. Adenosine 3',5'-bisphosphate is bound by residues threonine 139, serine 247, lysine 250, and arginine 264. Residues serine 247, lysine 250, and arginine 264 each contribute to the AMP site.

The protein belongs to the inositol monophosphatase superfamily. The cofactor is Mg(2+).

It carries out the reaction 3'-phosphoadenylyl sulfate + H2O = adenosine 5'-phosphosulfate + phosphate. The enzyme catalyses adenosine 3',5'-bisphosphate + H2O = AMP + phosphate. It catalyses the reaction adenosine 2',5'-bisphosphate + H2O = AMP + phosphate. The catalysed reaction is 1D-myo-inositol 1,4-bisphosphate + H2O = 1D-myo-inositol 4-phosphate + phosphate. It carries out the reaction 1D-myo-inositol 1,3,4-trisphosphate + H2O = 1D-myo-inositol 3,4-bisphosphate + phosphate. The protein operates within signal transduction; phosphatidylinositol signaling pathway. Functionally, phosphatase that converts adenosine 3'-phosphate 5'-phosphosulfate (PAPS) to adenosine 5'-phosphosulfate (APS) and 3'(2')-phosphoadenosine 5'-phosphate (PAP) to AMP. Is also able to hydrolyze inositol 1,4-bisphosphate and inositol 1,3,4-trisphosphate. The protein is Probable 3'(2'),5'-bisphosphate nucleotidase 4 (SAL4) of Arabidopsis thaliana (Mouse-ear cress).